The primary structure comprises 332 residues: Ornithine carbamoyltransferase, catabolic (332 aa).

Residues serine 60 to threonine 63, glutamine 87, arginine 111, and histidine 138 to glutamine 141 each bind carbamoyl phosphate. Residues asparagine 170, aspartate 230, and serine 234–methionine 235 each bind L-ornithine. Carbamoyl phosphate is bound by residues cysteine 271 to leucine 272 and arginine 316.

Belongs to the aspartate/ornithine carbamoyltransferase superfamily. OTCase family.

It localises to the cytoplasm. It carries out the reaction carbamoyl phosphate + L-ornithine = L-citrulline + phosphate + H(+). It participates in amino-acid degradation; L-arginine degradation via ADI pathway; carbamoyl phosphate from L-arginine: step 2/2. Its function is as follows. Reversibly catalyzes the transfer of the carbamoyl group from carbamoyl phosphate (CP) to the N(epsilon) atom of ornithine (ORN) to produce L-citrulline. The polypeptide is Ornithine carbamoyltransferase, catabolic (Bacillus thuringiensis subsp. konkukian (strain 97-27)).